Reading from the N-terminus, the 312-residue chain is MSDVLLNFIAGGVGGSCTVIVGHPFDTVKVRIQTMPMPKPGEKPQFTGALDCVKRTVSKEGFFALYKGMAAPLVGVSPLFAVFFGGCAVGKWLQQTDPSQEMTFIQNANAGALAGVFTTIVMVPGERIKCLLQVQQAGSAGSGVHYDGPLDVVKKLYKQGGISSIYRGTGATLLRDIPASAAYLSVYEYLKKKFSGEGAQRTLSPGATLMAGGLAGIANWGVCIPADVLKSRLQTAPEGKYPDGIRGVLREVLREEGPRALFKGFWPVMLRAFPANAACFFGLELTLAAFRYFGIGGHPTPSTEVVPLPHDE.

Solcar repeat units follow at residues Ser-2–Leu-93, Met-102–Lys-193, and Leu-203–Ala-289. The next 6 membrane-spanning stretches (helical) occupy residues Leu-5–Phe-25, Met-69–Val-89, Phe-104–Pro-124, Thr-172–Lys-192, Leu-209–Leu-229, and Leu-261–Gly-282.

It belongs to the mitochondrial carrier (TC 2.A.29) family.

Its subcellular location is the mitochondrion inner membrane. Functionally, seems to play a role in the maintenance of tissue differentiation in the developing embryo, but not for its initiation. The sequence is that of Protein dif-1 (dif-1) from Caenorhabditis elegans.